The sequence spans 864 residues: Leucine--tRNA ligase (864 aa).

The short motif at 42 to 52 (PYPSGKLHMGH) is the 'HIGH' region element. Positions 624 to 628 (KMSKS) match the 'KMSKS' region motif. Residue Lys627 coordinates ATP.

It belongs to the class-I aminoacyl-tRNA synthetase family.

It is found in the cytoplasm. It carries out the reaction tRNA(Leu) + L-leucine + ATP = L-leucyl-tRNA(Leu) + AMP + diphosphate. This Burkholderia vietnamiensis (strain G4 / LMG 22486) (Burkholderia cepacia (strain R1808)) protein is Leucine--tRNA ligase.